The chain runs to 869 residues: MAADVEGDVYVLVEHPFEYTGKDGRRIAIQPNERYRLLRRSTEHWWHVRREPGGRPFYLPAQYVRELPALGDPAPAPQPSVPQQRPAVPEPLAYDYRFVSTPVGADGSSAEPRGRASSLCGPARQRTGGQRNSLAPGGPACLYVRPAAPVRPAQSLDDLARGGTAPPAGLLGSAGHFKASSVAGSWVCPRPLAPSDSENVYEAIPDLRCPPRAESPKQVDDPPEPVYANVERQPRATSPRSAAAPPRLSPVWETHTDTGTGRPYYYNPDTGVTTWESPFETPEGTTSPATSRASVGSGESLETEWGQYWDEESRRVFFYNPLTGETAWEDETEELEEDHQEQLEMQPSLSPRSPGQQRPPTPETDYPELLASYPEEDYSPVGSFSDPGPASPLVAPPGWSCQITPDKQMLYTNQFTQEQWVRLEDQHGKPYFYNPEDSSVQWELPQVPIPAPRSVRKSSQDSDTPAQASPPEEKIKTLDKAGVLHRTKTVDKGKRLRKKHWSTSWTVLEGGVLTFFKDSKTSAAGGLRQPSKLSTPEYTVELKGASLSWAPKDKSSKKNVLELRSRDGSEYLIQHDSEAIISTWHKAIAEGISELSADLLQGEEGEPSSADFGSSERLGSWREEDVRQNAASPSLSPGGLESDLSRVRHKLRKFLQRRPTLQSLRDKGYIKDQVFGCALAQLCERERSPVPRFVQQCIRTVEARGLDIDGLYRISGNLATIQKLRYKVDHDERLDLDDGRWEDVHVITGALKLFFRELPEPLFPFSHFHQFIAAIKLQDPAQRSRCVRDLVRTLPAPNQDTLRLLIQHLCRVIEHGEQNRMTVQNVAIVFGPTLLRPEMEEASMPMTMVFQNQVVELILHQCADIFPPH.

Residues 6-69 enclose the SH3 domain; that stretch reads EGDVYVLVEH…PAQYVRELPA (64 aa). Ala-28 is modified (phosphotyrosine). Residues 104–134 are disordered; the sequence is GADGSSAEPRGRASSLCGPARQRTGGQRNSL. A phosphoserine mark is found at Ser-155, Ser-215, and Ser-249. Disordered regions lie at residues 208 to 300 and 331 to 401; these read RCPP…SGES and ETEE…GWSC. Over residues 209–220 the composition is skewed to basic and acidic residues; that stretch reads CPPRAESPKQVD. Low complexity predominate over residues 235-250; it reads RATSPRSAAAPPRLSP. The WW 1 domain maps to 246-280; sequence PRLSPVWETHTDTGTGRPYYYNPDTGVTTWESPFE. A compositionally biased stretch (polar residues) spans 283–294; it reads EGTTSPATSRAS. Residues 299-333 form the WW 2 domain; sequence ESLETEWGQYWDEESRRVFFYNPLTGETAWEDETE. A compositionally biased stretch (polar residues) spans 345–356; the sequence is MQPSLSPRSPGQ. Residue Ser-350 is modified to Phosphoserine. The WW 3 domain occupies 414-447; sequence QFTQEQWVRLEDQHGKPYFYNPEDSSVQWELPQV. Disordered stretches follow at residues 449–477 and 623–642; these read IPAP…KIKT and EEDV…GLES. Residues Ser-459 and Ser-462 each carry the phosphoserine modification. The residue at position 464 (Thr-464) is a Phosphothreonine. At Ser-469 the chain carries Phosphoserine. The PH domain maps to 477–593; it reads TLDKAGVLHR…WHKAIAEGIS (117 aa). Phosphoserine is present on residues Ser-632 and Ser-636. The region spanning 677–866 is the Rho-GAP domain; it reads CALAQLCERE…LILHQCADIF (190 aa).

In terms of assembly, interacts with SH3KBP1/CIN85. Widely expressed. Highly expressed in kidney, lung, small intestine and thymus.

The protein resides in the cytoplasm. It localises to the membrane. In terms of biological role, rho GTPase-activating protein which may be involved in clathrin-mediated endocytosis. GTPase activators for the Rho-type GTPases act by converting them to an inactive GDP-bound state. Has activity toward CDC42 and RAC1. The protein is Rho GTPase-activating protein 27 (Arhgap27) of Mus musculus (Mouse).